The primary structure comprises 254 residues: UDP-2,3-diacylglucosamine hydrolase (254 aa).

Aspartate 8, histidine 10, aspartate 41, asparagine 79, and histidine 114 together coordinate Mn(2+). Substrate is bound at residue 79–80; it reads NR. Positions 122, 160, 164, 167, and 195 each coordinate substrate. Residues histidine 195 and histidine 197 each contribute to the Mn(2+) site.

Belongs to the LpxH family. Requires Mn(2+) as cofactor.

Its subcellular location is the cell inner membrane. It catalyses the reaction UDP-2-N,3-O-bis[(3R)-3-hydroxytetradecanoyl]-alpha-D-glucosamine + H2O = 2-N,3-O-bis[(3R)-3-hydroxytetradecanoyl]-alpha-D-glucosaminyl 1-phosphate + UMP + 2 H(+). It participates in glycolipid biosynthesis; lipid IV(A) biosynthesis; lipid IV(A) from (3R)-3-hydroxytetradecanoyl-[acyl-carrier-protein] and UDP-N-acetyl-alpha-D-glucosamine: step 4/6. Functionally, hydrolyzes the pyrophosphate bond of UDP-2,3-diacylglucosamine to yield 2,3-diacylglucosamine 1-phosphate (lipid X) and UMP by catalyzing the attack of water at the alpha-P atom. Involved in the biosynthesis of lipid A, a phosphorylated glycolipid that anchors the lipopolysaccharide to the outer membrane of the cell. This is UDP-2,3-diacylglucosamine hydrolase from Aeromonas salmonicida (strain A449).